The chain runs to 274 residues: Thiamine kinase (274 aa).

It belongs to the thiamine kinase family.

The catalysed reaction is thiamine + ATP = thiamine phosphate + ADP + H(+). Its pathway is cofactor biosynthesis; thiamine diphosphate biosynthesis; thiamine phosphate from thiamine: step 1/1. Functionally, catalyzes the ATP-dependent phosphorylation of thiamine to thiamine phosphate. Is involved in thiamine salvage. This chain is Thiamine kinase, found in Shigella dysenteriae serotype 1 (strain Sd197).